The sequence spans 188 residues: Trafficking protein particle complex subunit 5 (188 aa).

It belongs to the TRAPP small subunits family. BET3 subfamily. Part of the multisubunit TRAPP (transport protein particle) complex.

It is found in the golgi apparatus. The protein resides in the cis-Golgi network. It localises to the endoplasmic reticulum. In terms of biological role, may play a role in vesicular transport from endoplasmic reticulum to Golgi. The protein is Trafficking protein particle complex subunit 5 (TRAPPC5) of Gallus gallus (Chicken).